The sequence spans 59 residues: Large ribosomal subunit protein bL32 (59 aa).

Residues 1 to 20 (MAVPRNRHSNARKNIRRSHH) are disordered.

It belongs to the bacterial ribosomal protein bL32 family.

The chain is Large ribosomal subunit protein bL32 from Chlamydia trachomatis serovar A (strain ATCC VR-571B / DSM 19440 / HAR-13).